Here is a 360-residue protein sequence, read N- to C-terminus: Phospho-N-acetylmuramoyl-pentapeptide-transferase (360 aa).

A run of 10 helical transmembrane segments spans residues Tyr21 to Gly41, Thr71 to Ala91, Ser94 to Ile114, Leu142 to Val162, Ile168 to Ser188, Gly199 to Thr219, Ala236 to Phe256, Val263 to Leu283, Phe288 to Val308, and Val338 to Lys358.

The protein belongs to the glycosyltransferase 4 family. MraY subfamily. The cofactor is Mg(2+).

The protein localises to the cell inner membrane. The enzyme catalyses UDP-N-acetyl-alpha-D-muramoyl-L-alanyl-gamma-D-glutamyl-meso-2,6-diaminopimeloyl-D-alanyl-D-alanine + di-trans,octa-cis-undecaprenyl phosphate = di-trans,octa-cis-undecaprenyl diphospho-N-acetyl-alpha-D-muramoyl-L-alanyl-D-glutamyl-meso-2,6-diaminopimeloyl-D-alanyl-D-alanine + UMP. Its pathway is cell wall biogenesis; peptidoglycan biosynthesis. Functionally, catalyzes the initial step of the lipid cycle reactions in the biosynthesis of the cell wall peptidoglycan: transfers peptidoglycan precursor phospho-MurNAc-pentapeptide from UDP-MurNAc-pentapeptide onto the lipid carrier undecaprenyl phosphate, yielding undecaprenyl-pyrophosphoryl-MurNAc-pentapeptide, known as lipid I. The sequence is that of Phospho-N-acetylmuramoyl-pentapeptide-transferase from Tolumonas auensis (strain DSM 9187 / NBRC 110442 / TA 4).